Here is a 138-residue protein sequence, read N- to C-terminus: Small ribosomal subunit protein uS11c (138 aa).

The protein belongs to the universal ribosomal protein uS11 family. In terms of assembly, part of the 30S ribosomal subunit.

Its subcellular location is the plastid. It localises to the chloroplast. The sequence is that of Small ribosomal subunit protein uS11c from Morus indica (Mulberry).